A 184-amino-acid chain; its full sequence is Ribosome maturation factor RimP (184 aa).

The protein belongs to the RimP family.

The protein resides in the cytoplasm. In terms of biological role, required for maturation of 30S ribosomal subunits. The sequence is that of Ribosome maturation factor RimP from Corynebacterium diphtheriae (strain ATCC 700971 / NCTC 13129 / Biotype gravis).